The sequence spans 365 residues: UDP-N-acetylglucosamine--N-acetylmuramyl-(pentapeptide) pyrophosphoryl-undecaprenol N-acetylglucosamine transferase (365 aa).

Residues 10–12 (TGG), Asn-128, Arg-170, Ser-199, Ile-250, and Gln-295 each bind UDP-N-acetyl-alpha-D-glucosamine.

It belongs to the glycosyltransferase 28 family. MurG subfamily.

The protein resides in the cell inner membrane. The catalysed reaction is di-trans,octa-cis-undecaprenyl diphospho-N-acetyl-alpha-D-muramoyl-L-alanyl-D-glutamyl-meso-2,6-diaminopimeloyl-D-alanyl-D-alanine + UDP-N-acetyl-alpha-D-glucosamine = di-trans,octa-cis-undecaprenyl diphospho-[N-acetyl-alpha-D-glucosaminyl-(1-&gt;4)]-N-acetyl-alpha-D-muramoyl-L-alanyl-D-glutamyl-meso-2,6-diaminopimeloyl-D-alanyl-D-alanine + UDP + H(+). The protein operates within cell wall biogenesis; peptidoglycan biosynthesis. Cell wall formation. Catalyzes the transfer of a GlcNAc subunit on undecaprenyl-pyrophosphoryl-MurNAc-pentapeptide (lipid intermediate I) to form undecaprenyl-pyrophosphoryl-MurNAc-(pentapeptide)GlcNAc (lipid intermediate II). This chain is UDP-N-acetylglucosamine--N-acetylmuramyl-(pentapeptide) pyrophosphoryl-undecaprenol N-acetylglucosamine transferase, found in Pelodictyon phaeoclathratiforme (strain DSM 5477 / BU-1).